The following is a 439-amino-acid chain: Dihydroorotase (439 aa).

Residues His-65 and His-67 each coordinate Zn(2+). Substrate is bound by residues 67-69 (HFR) and Asn-99. Asp-156, His-183, His-246, and Asp-321 together coordinate Zn(2+). Residue Asp-321 is part of the active site. Substrate is bound by residues His-325 and 339–340 (FG).

Belongs to the metallo-dependent hydrolases superfamily. DHOase family. Class I DHOase subfamily. Zn(2+) serves as cofactor.

It catalyses the reaction (S)-dihydroorotate + H2O = N-carbamoyl-L-aspartate + H(+). Its pathway is pyrimidine metabolism; UMP biosynthesis via de novo pathway; (S)-dihydroorotate from bicarbonate: step 3/3. Catalyzes the reversible cyclization of carbamoyl aspartate to dihydroorotate. This Chlorobaculum tepidum (strain ATCC 49652 / DSM 12025 / NBRC 103806 / TLS) (Chlorobium tepidum) protein is Dihydroorotase.